A 264-amino-acid chain; its full sequence is MVWLPRVPCVAAVILLLTVLSPPVALVRDSRPWFLEYCKSECHFYNGTQRVRFLKRYFYNLEENLRFDSDVGEFRAVTELGRPDAENWNSQPEILDEKRAAVDTYCRHNYEIFDNFLVPRRVEPTVTVYPTKTQPLEHHNLLVCSVSDFYPGNIEVRWFRNGKEEKTGIVSTGLVRNGDWTFQTLVMLETVPQSGEVYTCQVEHPSLTDPVTVEWKAQSTSAQNKMLSGVGGFVLGLLFLRAGLFIYFRNQKGQSGLQPTGLLS.

Residues 1-31 (MVWLPRVPCVAAVILLLTVLSPPVALVRDSR) form the signal peptide. Positions 32-121 (PWFLEYCKSE…IFDNFLVPRR (90 aa)) are beta-1. The Extracellular portion of the chain corresponds to 32–225 (PWFLEYCKSE…KAQSTSAQNK (194 aa)). 2 disulfides stabilise this stretch: cysteine 42–cysteine 106 and cysteine 144–cysteine 200. A glycan (N-linked (GlcNAc...) asparagine) is linked at asparagine 46. Residues 122 to 215 (VEPTVTVYPT…SLTDPVTVEW (94 aa)) are beta-2. The Ig-like C1-type domain occupies 124–214 (PTVTVYPTKT…PSLTDPVTVE (91 aa)). The connecting peptide stretch occupies residues 216–225 (KAQSTSAQNK). A helical transmembrane segment spans residues 226-248 (MLSGVGGFVLGLLFLRAGLFIYF). The Cytoplasmic portion of the chain corresponds to 249 to 264 (RNQKGQSGLQPTGLLS).

The protein belongs to the MHC class II family. Post-translationally, ubiquitinated in immature dendritic cells leading to down-regulation of MHC class II.

The protein resides in the membrane. The sequence is that of H-2 class II histocompatibility antigen, I-A beta chain (H2-Eb1) from Mus musculus (Mouse).